The sequence spans 440 residues: Glucoside xylosyltransferase 1 (440 aa).

Residues 1-6 (MRRYLR) lie on the Cytoplasmic side of the membrane. The helical; Signal-anchor for type II membrane protein transmembrane segment at 7–29 (VVVLCVACGFCSLLYAFSQLAVS) threads the bilayer. Residues 30–440 (LEEGTGGGGG…DRYARSPKEK (411 aa)) lie on the Lumenal side of the membrane. N-linked (GlcNAc...) asparagine glycosylation is found at Asn173, Asn237, and Asn278.

The protein belongs to the glycosyltransferase 8 family.

It localises to the membrane. The catalysed reaction is 3-O-(beta-D-glucosyl)-L-seryl-[EGF-like domain protein] + UDP-alpha-D-xylose = 3-O-[alpha-D-xylosyl-(1-&gt;3)-beta-D-glucosyl]-L-seryl-[EGF-like domain protein] + UDP + H(+). In terms of biological role, glycosyltransferase which elongates the O-linked glucose attached to EGF-like repeats in the extracellular domain of Notch proteins by catalyzing the addition of xylose. The chain is Glucoside xylosyltransferase 1 (GXYLT1) from Homo sapiens (Human).